A 50-amino-acid polypeptide reads, in one-letter code: Thrombin-like enzyme BpirSP41 (50 aa).

The Peptidase S1 domain maps to 1–50 (VVGGDECDINEHPFLAFLYSHGYFCGLTLINQEWVLTAAHCDRRFMRIYL). Cys25 and Cys41 form a disulfide bridge. Catalysis depends on His40, which acts as the Charge relay system.

This sequence belongs to the peptidase S1 family. Snake venom subfamily. In terms of assembly, monomer. Post-translationally, N-glycosylated. In terms of tissue distribution, expressed by the venom gland.

It is found in the secreted. Inhibited by serine protease inhibitors PMSF, benzamidine, leupeptin and aprotinin, as well as by copper ions (Cu2+). Not inhibited by metalloprotease inhibitors EDTA, EGTA and 1,10-phenanthroline, as well as by barium (Ba2+) and calcium ion (Ca2+). Snake venom serine protease that interferes with the hemostatic system of the prey. It almost completely degrades both Aalpha (FGA) and Bbeta (FGB) chains of fibrinogen. It presents a higher ability to degrade fibrin clots than BpirSP27. It hydrolyzes chromogenic substrates S-2238 (used for testing thrombin activity), S-2222 (factor Xa), S-2266 (glandular kallikrein and factor XIa), and S-2302 (plasma kallikrein, factor XIa and XIIa). It shows a decrease in the clotting time of human plasma in the presence of increasing doses of the enzyme. Its minimum coagulant dose (MCD) is 20 ug. It promotes platelet aggregation with a maximum of aggregation of 20%, regardless of the concentration increase or the presence of calcium. It also shows 40% inhibition of the hemolytic activity promoted by the complement pathways and possess only a minor role in the induction of edema and pain in rat. The polypeptide is Thrombin-like enzyme BpirSP41 (Bothrops pirajai (Piraja's lancehead)).